The primary structure comprises 566 residues: Proline--tRNA ligase (566 aa).

Belongs to the class-II aminoacyl-tRNA synthetase family. ProS type 1 subfamily. As to quaternary structure, homodimer.

Its subcellular location is the cytoplasm. It catalyses the reaction tRNA(Pro) + L-proline + ATP = L-prolyl-tRNA(Pro) + AMP + diphosphate. Catalyzes the attachment of proline to tRNA(Pro) in a two-step reaction: proline is first activated by ATP to form Pro-AMP and then transferred to the acceptor end of tRNA(Pro). As ProRS can inadvertently accommodate and process non-cognate amino acids such as alanine and cysteine, to avoid such errors it has two additional distinct editing activities against alanine. One activity is designated as 'pretransfer' editing and involves the tRNA(Pro)-independent hydrolysis of activated Ala-AMP. The other activity is designated 'posttransfer' editing and involves deacylation of mischarged Ala-tRNA(Pro). The misacylated Cys-tRNA(Pro) is not edited by ProRS. The sequence is that of Proline--tRNA ligase from Shouchella clausii (strain KSM-K16) (Alkalihalobacillus clausii).